The following is a 353-amino-acid chain: Inactive metacaspase-4 (353 aa).

A lipid anchor (N-myristoyl glycine) is attached at G2.

The protein belongs to the peptidase C14B family. In terms of processing, palmitoylated. Post-translationally, proteolytic cleavage by MCA3 occurs prior or during secretion and requires MCA4 membrane localization. Cleavage is dispensable for secretion and parasite growth and virulence in the mammalian host. In vitro, can be cleaved by MCA2 but specifically cleaved by MCA3 in vivo.

The protein resides in the cell projection. It localises to the cilium. The protein localises to the flagellum membrane. It is found in the secreted. Its function is as follows. Inactive metacaspase which plays a role in parasite bloodstream form growth and in parasite virulence within the mammalian host. The polypeptide is Inactive metacaspase-4 (Trypanosoma brucei brucei).